The chain runs to 547 residues: Kelch repeat and BTB domain-containing protein 2 (547 aa).

The BTB domain maps to 20 to 89; that stretch reads CDVIITIGDG…LYNRHISSMN (70 aa). Kelch repeat units follow at residues 295–342, 343–389, and 391–454; these read DIII…VIDD, TIYA…VLDQ, and IYII…SHKD.

As to quaternary structure, interacts (via BTB domain) with host CUL3.

It localises to the host cytoplasm. Probable substrate-specific adapter of CUL3-containing E3 ubiquitin-protein ligases which mediate the ubiquitination and subsequent proteasomal degradation of host target proteins. The chain is Kelch repeat and BTB domain-containing protein 2 (KBTB2) from Bos taurus (Bovine).